We begin with the raw amino-acid sequence, 104 residues long: Transcription factor ILI1 (104 aa).

Basic residues predominate over residues 1–11; it reads MSSSRRSRSRR. A disordered region spans residues 1-27; it reads MSSSRRSRSRRAGSSVPSSSSSSRTSI. The span at 12 to 27 shows a compositional bias: low complexity; sequence AGSSVPSSSSSSRTSI. A bHLH domain is found at 16-71; sequence VPSSSSSSRTSISEDQIAELLSKLQALLPESQARNGAHRGSAARVLQETCSYIRSL.

It belongs to the bHLH protein family. As to quaternary structure, interacts with IBH1.

In terms of biological role, atypical and probable non DNA-binding bHLH transcription factor that acts as a positive regulator of cell elongation and plant development. Binds the transcription repressor IBH1 and forms a heterodimer of antagonistic bHLH transcription factors that function downstream of BZR1 to mediate brassinosteroid regulation of cell elongation and lamina inclination. This chain is Transcription factor ILI1 (ILI1), found in Oryza sativa subsp. indica (Rice).